The chain runs to 1019 residues: Serine/threonine-protein kinase 31 (1019 aa).

One can recognise a Tudor domain in the interval 78–137; it reads NLDPNKIYGGLFSEDQCWYRCKVLKIISVEKCLVRYIDYGNTEILNRSDIVEIPLELQFS. Positions 298–355 form a coiled coil; that stretch reads EKIKQDQKLIEENEKLKTEKDALLESYKALELKVEQIAQELQQEKAAAVDLTNHLEYT. The region spanning 710 to 1019 is the Protein kinase domain; that stretch reads IGLLKYMNSG…TRNGEANFDC (310 aa). ATP contacts are provided by residues 716 to 724 and lysine 737; that span reads MNSGGLLTM.

The protein belongs to the protein kinase superfamily. Ser/Thr protein kinase family. Testis specific.

It catalyses the reaction L-seryl-[protein] + ATP = O-phospho-L-seryl-[protein] + ADP + H(+). It carries out the reaction L-threonyl-[protein] + ATP = O-phospho-L-threonyl-[protein] + ADP + H(+). The protein is Serine/threonine-protein kinase 31 (STK31) of Homo sapiens (Human).